Consider the following 642-residue polypeptide: Sec1 family domain-containing protein 1 (642 aa).

Ala2 carries the post-translational modification N-acetylalanine. Phosphoserine is present on residues Ser37, Ser303, and Ser528.

The protein belongs to the STXBP/unc-18/SEC1 family. As to quaternary structure, interacts with STX17. Interacts with STX5A. Interacts with the COG complex via COG4.

Its subcellular location is the cytoplasm. It is found in the endoplasmic reticulum membrane. The protein localises to the golgi apparatus. It localises to the golgi stack membrane. Functionally, plays a role in SNARE-pin assembly and Golgi-to-ER retrograde transport via its interaction with COG4. Involved in vesicular transport between the endoplasmic reticulum and the Golgi. The protein is Sec1 family domain-containing protein 1 (SCFD1) of Homo sapiens (Human).